Consider the following 137-residue polypeptide: Large ribosomal subunit protein uL16 (137 aa).

It belongs to the universal ribosomal protein uL16 family. Part of the 50S ribosomal subunit.

Functionally, binds 23S rRNA and is also seen to make contacts with the A and possibly P site tRNAs. The chain is Large ribosomal subunit protein uL16 from Streptococcus agalactiae serotype Ia (strain ATCC 27591 / A909 / CDC SS700).